We begin with the raw amino-acid sequence, 474 residues long: Trigger factor (474 aa).

In terms of domain architecture, PPIase FKBP-type spans 165–250 (GDRVTIDYLG…VKTVSKPDEL (86 aa)). Over residues 451–467 (VKKKTASDNKKSNEIKK) the composition is skewed to basic and acidic residues. Positions 451–474 (VKKKTASDNKKSNEIKKKSTMKKV) are disordered.

Belongs to the FKBP-type PPIase family. Tig subfamily.

The protein localises to the cytoplasm. The enzyme catalyses [protein]-peptidylproline (omega=180) = [protein]-peptidylproline (omega=0). Involved in protein export. Acts as a chaperone by maintaining the newly synthesized protein in an open conformation. Functions as a peptidyl-prolyl cis-trans isomerase. The polypeptide is Trigger factor (Bartonella bacilliformis (strain ATCC 35685 / KC583 / Herrer 020/F12,63)).